The sequence spans 357 residues: Peptide chain release factor 1 (357 aa).

Position 236 is an N5-methylglutamine (Gln236).

The protein belongs to the prokaryotic/mitochondrial release factor family. Methylated by PrmC. Methylation increases the termination efficiency of RF1.

The protein localises to the cytoplasm. Peptide chain release factor 1 directs the termination of translation in response to the peptide chain termination codons UAG and UAA. The chain is Peptide chain release factor 1 from Mycolicibacterium gilvum (strain PYR-GCK) (Mycobacterium gilvum (strain PYR-GCK)).